Reading from the N-terminus, the 77-residue chain is uncharacterized protein (77 aa).

2 consecutive 4Fe-4S ferredoxin-type domains span residues 3 to 32 and 36 to 65; these read VEII…WTKD and KYYA…IKVV. [4Fe-4S] cluster is bound by residues Cys-12, Cys-15, Cys-18, Cys-22, Cys-45, Cys-48, Cys-51, and Cys-55.

[4Fe-4S] cluster serves as cofactor.

Its function is as follows. Ferredoxins are iron-sulfur proteins that transfer electrons probably in the CO-dehydrogenase complex. This is an uncharacterized protein from Methanocaldococcus jannaschii (strain ATCC 43067 / DSM 2661 / JAL-1 / JCM 10045 / NBRC 100440) (Methanococcus jannaschii).